The chain runs to 239 residues: Transcriptional regulatory protein BtsR (239 aa).

A Response regulatory domain is found at 3-116 (KVLIVDDEPL…RLEKTLARLR (114 aa)). Residue aspartate 54 is modified to 4-aspartylphosphate. Residues 137–239 (IPCTGHSRIY…LKSLKEAIGL (103 aa)) form the HTH LytTR-type domain.

Post-translationally, phosphorylated by BtsS.

Member of the two-component regulatory system BtsS/BtsR. BtsR regulates expression of btsT by binding to its promoter region. This chain is Transcriptional regulatory protein BtsR, found in Shigella flexneri.